The chain runs to 351 residues: ABC transporter nucleoside-binding protein BmpA (351 aa).

A signal peptide spans 1–21; that stretch reads MKKRVIAVSAIALASVAVLAG. C22 carries the N-palmitoyl cysteine lipid modification. C22 is lipidated: S-diacylglycerol cysteine.

It belongs to the BMP lipoprotein family. In terms of assembly, the complex is composed of two ATP-binding proteins (NupA), two transmembrane proteins (NupB and NupC) and a solute-binding protein (BmpA).

The protein resides in the cell membrane. In terms of biological role, part of an ABC transporter complex involved in the uptake of all common nucleosides. The chain is ABC transporter nucleoside-binding protein BmpA from Lactococcus lactis subsp. cremoris (strain MG1363).